The sequence spans 72 residues: Antimicrobial peptide MeuNaTxbeta-4 (72 aa).

The signal sequence occupies residues 1–5; it reads LIGVK. The 63-residue stretch at 7–69 folds into the LCN-type CS-alpha/beta domain; sequence EHGYLLDKYT…LWHYETNKCN (63 aa). 4 disulfides stabilise this stretch: cysteine 18–cysteine 68, cysteine 22–cysteine 43, cysteine 29–cysteine 50, and cysteine 33–cysteine 52.

As to expression, expressed by the venom gland.

It is found in the secreted. Functionally, antimicrobial peptide with weak activity against both Gram-positive and -negative bacteria. Its antibiotic activity is potentiated by other antibacterial peptides such as Meucin-49. This Mesobuthus eupeus (Lesser Asian scorpion) protein is Antimicrobial peptide MeuNaTxbeta-4.